Consider the following 362-residue polypeptide: Zinc transporter 9 (362 aa).

A signal peptide spans 1 to 21; the sequence is MAFDLKLTACLLLAVFSLAAA. Over 22–42 the chain is Extracellular; the sequence is ADCECQPSDEGHDAAKSRTLK. The helical transmembrane segment at 43-63 threads the bilayer; it reads VIAIFCILVGSSAGCAIPSLG. Over 64–74 the chain is Cytoplasmic; it reads RRFPALRPDTS. Residues 75 to 95 form a helical membrane-spanning segment; that stretch reads LFFALKAFAAGVILATAFVHI. Residues 96–120 lie on the Extracellular side of the membrane; sequence LPVSFDKLGSPCLVDGPWRKYPFTG. Residues 121–141 traverse the membrane as a helical segment; sequence LVAMLAAVATLLLDTIATGYF. Residues 142-207 are Cytoplasmic-facing; that stretch reads LQRAQDSRGA…EDRAKLVRHR (66 aa). A helical membrane pass occupies residues 208–228; it reads VISQVFELGIIVHSIIIGISL. The Extracellular segment spans residues 229 to 239; that stretch reads GASESPSTIRP. The helical transmembrane segment at 240 to 260 threads the bilayer; the sequence is LVAALTFHQFFEGIGLGGCIV. The Cytoplasmic segment spans residues 261-269; the sequence is QARFHLKSA. Residues 270-290 form a helical membrane-spanning segment; that stretch reads VTMAIFFSLTTPVGIMIGIGI. Residues 291–301 are Extracellular-facing; it reads SSAYNENSPTA. The helical transmembrane segment at 302-322 threads the bilayer; sequence LIVEGILDAAAAGILNYMALV. Over 323-341 the chain is Cytoplasmic; sequence DLLAEDFMNPRVRKSGRLQ. A helical transmembrane segment spans residues 342–362; sequence LIISILLLVGIALMSLLGIWA.

This sequence belongs to the ZIP transporter (TC 2.A.5) family.

Its subcellular location is the cell membrane. Zinc transporter that may be involved in zinc uptake from the rhizosphere. The polypeptide is Zinc transporter 9 (ZIP9) (Oryza sativa subsp. japonica (Rice)).